The following is a 448-amino-acid chain: Beclin-1 (448 aa).

Met-1 is subject to N-acetylmethionine. Phosphoserine is present on residues Ser-14 and Ser-29. A disordered region spans residues 47-72; it reads TTAQAKPGESQEEEANSGEEPFIETR. Ser-88, Ser-91, and Ser-94 each carry phosphoserine; by AMPK. Residues 106 to 125 carry the BH3 motif; sequence TMENLSRRLKVTGDLFDIMS. The interval 110–157 is interaction with BCL2 and BCL2L1 isoform Bcl-X(L); the sequence is LSRRLKVTGDLFDIMSGQTDVDHPLCEECTDTLLDQLDTQLNVTENEC. Residue Thr-117 is modified to Phosphothreonine; by DAPK1. A coiled-coil region spans residues 140–267; it reads DTLLDQLDTQ…QLDKLKKTNV (128 aa). Residues 243-448 are evolutionary conserved domain (ECD); that stretch reads DELKSVENQM…AWVSSQFYNK (206 aa). Glycyl lysine isopeptide (Lys-Gly) (interchain with G-Cter in ubiquitin) cross-links involve residues Lys-400 and Lys-435. The required for membrane-association stretch occupies residues 423–448; the sequence is WTKALKFMLTNLKWGLAWVSSQFYNK.

The protein belongs to the beclin family. As to quaternary structure, a homodimeric form is proposed to exist; this metastable form readily transits to ATG14- or UVRAG-containing complexes with BECN1:UVRAG being more stable than BECN1:ATG14. Component of the PI3K (PI3KC3/PI3K-III/class III phosphatidylinositol 3-kinase) complex the core of which is composed of the catalytic subunit PIK3C3, the regulatory subunit PIK3R4 and BECN1 associating with additional regulatory/auxiliary subunits to form alternative complex forms. Alternative complex forms containing a fourth regulatory subunit in a mutually exclusive manner are PI3K complex I (PI3KC3-C1) containing ATG14, and PI3K complex II (PI3KC3-C2) containing UVRAG. PI3KC3-C1 displays a V-shaped architecture with PIK3R4 serving as a bridge between PIK3C3 and the ATG14:BECN1 subcomplex. Both, PI3KC3-C1 and PI3KC3-C2, can associate with further regulatory subunits, such as RUBCN, SH3GLB1/Bif-1 and AMBRA1. PI3KC3-C1 probably associates with PIK3CB. Forms a complex with PPP2CA and AMBRA1; AMBRA1 and BECN1 components of the complex regulate MYC stability via different pathways. Component of the complex, at least composed of LRPPRC, BECN1 and BCL2; the interactions prevent BECN1 from forming an autophagy-inducing complex with PIK3C3. Interacts with AMBRA1, GOPC, GRID2. Interacts with BCL2 and BCL2L1 isoform Bcl-X(L); the interaction inhibits BECN1 function in promoting autophagy by interfering with the formation of the PI3K complex. Interacts with cytosolic HMGB1; inhibits the interaction of BECN1 and BCL2 leading to promotion of autophagy. Interacts with USP10, USP13, DAPK1, RAB39A. Interacts with SLAMF1. Interacts with the poly-Gln domain of ATXN3; the interaction causes deubiquitination at Lys-400 and stabilizes BECN1. Interacts with VMP1. Interacts with TRIM5; the interaction causes activation of BECN1 by causing its dissociation from its inhibitors BCL2 and TAB2. Interacts with active ULK1 (phosphorylated on 'Ser-317') and MEFV simultaneously. Interacts with WDR81 and WDR91; negatively regulates the PI3 kinase/PI3K activity associated with endosomal membranes. Interacts with LAPTM4B; competes with EGFR for LAPTM4B binding; regulates EGFR activity. Interacts with TRIM50. Interacts with TRIM16. Interacts with ATG14; this interaction is increased in the absence of TMEM39A. Interacts with WASHC1; preventing interaction with AMBRA1 and the DCX(AMBRA1) complex and subsequent ubiquitination. Interacts with TRIM17. Interacts with BCL2L10/BCL-B (via BH1 domain). Interacts with SH3BGRL. Interacts with IRGM; enhancing BECN1-interacting partners and influencing the composition of the BECN1 complex. Interacts with ARMC3. Interacts with LRPPRC. In terms of processing, phosphorylation at Thr-117 by DAPK1 reduces its interaction with BCL2 and BCL2L1 and promotes induction of autophagy. In response to autophagic stimuli, phosphorylated at serine residues by AMPK in an ATG14-dependent manner, and this phosphorylation is critical for maximally efficient autophagy. Polyubiquitinated by NEDD4, both with 'Lys-11'- and 'Lys-63'-linkages. 'Lys-11'-linked polyubiquitination leads to degradation and is enhanced when the stabilizing interaction partner VPS34 is depleted. Deubiquitinated by USP10 and USP13, leading to stabilize the PIK3C3/VPS34-containing complexes. Polyubiquitinated at Lys-400 with 'Lys-48'-linkages. 'Lys-48'-linked polyubiquitination of Lys-400 leads to degradation. Deubiquitinated by ATXN3, leading to stabilization. Ubiquitinated at Lys-435 via 'Lys-63'-linkage by the DCX(AMBRA1) complex, thereby increasing the association between BECN1 and PIK3C3 to promote PIK3C3 activity. 'Lys-48'-linked ubiquitination by RNF216 leads to proteasomal degradation and autophagy inhibition. Post-translationally, proteolytically processed by caspases including CASP8 and CASP3; the C-terminal fragments lack autophagy-inducing capacity and are proposed to induce apoptosis. Thus the cleavage is proposed to be an determinant to switch from autophagy to apoptosis pathways affecting cellular homeostasis including viral infections and survival of tumor cells.

Its subcellular location is the cytoplasm. It localises to the golgi apparatus. It is found in the trans-Golgi network membrane. The protein localises to the endosome membrane. The protein resides in the endoplasmic reticulum membrane. Its subcellular location is the mitochondrion membrane. It localises to the cytoplasmic vesicle. It is found in the autophagosome. The protein localises to the mitochondrion. The protein resides in the nucleus. Functionally, plays a central role in autophagy. Acts as a core subunit of the PI3K complex that mediates formation of phosphatidylinositol 3-phosphate; different complex forms are believed to play a role in multiple membrane trafficking pathways: PI3KC3-C1 is involved in initiation of autophagosomes and PI3KC3-C2 in maturation of autophagosomes and endocytosis. Involved in regulation of degradative endocytic trafficking and required for the abscission step in cytokinesis, probably in the context of PI3KC3-C2. Essential for the formation of PI3KC3-C2 but not PI3KC3-C1 PI3K complex forms. Involved in endocytosis. May play a role in antiviral host defense. Beclin-1-C 35 kDa localized to mitochondria can promote apoptosis; it induces the mitochondrial translocation of BAX and the release of proapoptotic factors. This Rattus norvegicus (Rat) protein is Beclin-1 (Becn1).